A 105-amino-acid chain; its full sequence is ATP synthase subunit c (105 aa).

The next 3 membrane-spanning stretches (helical) occupy residues 3–23, 32–52, and 78–98; these read FLSLFFLALAGVAFAHDGGMG, SILGAMIGLGIAAFGGAIGMG, and VAMAMIEAQVIYTLVFAIIAI.

Belongs to the ATPase C chain family. In terms of assembly, F-type ATPases have 2 components, F(1) - the catalytic core - and F(0) - the membrane proton channel. F(1) has five subunits: alpha(3), beta(3), gamma(1), delta(1), epsilon(1). F(0) has three main subunits: a(1), b(2) and c(10-14). The alpha and beta chains form an alternating ring which encloses part of the gamma chain. F(1) is attached to F(0) by a central stalk formed by the gamma and epsilon chains, while a peripheral stalk is formed by the delta and b chains.

It localises to the cell inner membrane. Its function is as follows. F(1)F(0) ATP synthase produces ATP from ADP in the presence of a proton or sodium gradient. F-type ATPases consist of two structural domains, F(1) containing the extramembraneous catalytic core and F(0) containing the membrane proton channel, linked together by a central stalk and a peripheral stalk. During catalysis, ATP synthesis in the catalytic domain of F(1) is coupled via a rotary mechanism of the central stalk subunits to proton translocation. Key component of the F(0) channel; it plays a direct role in translocation across the membrane. A homomeric c-ring of between 10-14 subunits forms the central stalk rotor element with the F(1) delta and epsilon subunits. This is ATP synthase subunit c from Helicobacter pylori (strain Shi470).